An 890-amino-acid polypeptide reads, in one-letter code: DNA mismatch repair protein MutS (890 aa).

645-652 (GPNMAGKS) contributes to the ATP binding site.

It belongs to the DNA mismatch repair MutS family.

Its function is as follows. This protein is involved in the repair of mismatches in DNA. It is possible that it carries out the mismatch recognition step. This protein has a weak ATPase activity. The sequence is that of DNA mismatch repair protein MutS from Rickettsia conorii (strain ATCC VR-613 / Malish 7).